Consider the following 25-residue polypeptide: Chrysophsin-1 (25 aa).

Residue histidine 25 is modified to Histidine amide.

Gill. Localized in certain epithelial cells lining the surface of secondary lamellae and eosinophilic granule cell-like cells at the base of secondary lamellae.

Its subcellular location is the secreted. Functionally, has antibacterial activity against Gram-positive bacteria B.subtilis ATCC 6633, L.garvieae ATCC 49156 and S.iniae F-8502, and Gram-negative bacteria E.coli WT-2, V.anguillarum ATCC 19264, V.penaeicida KHA, V.harveyi ATCC 14126, V.vulnificus ATCC 33148, A.salmonicida NCMB 1102 and P.putida ATCC 12633. Has hemolytic activity against human red blood cells. Seems to disrupt the membranes by adopting an alpha helical conformation. May play a significant role in innate host defense. This chain is Chrysophsin-1, found in Pagrus major (Red sea bream).